The primary structure comprises 498 residues: Glycerol kinase (498 aa).

ADP is bound at residue Thr13. Residues Thr13, Thr14, and Ser15 each contribute to the ATP site. Residue Thr13 coordinates sn-glycerol 3-phosphate. Arg17 contributes to the ADP binding site. Sn-glycerol 3-phosphate is bound by residues Arg83, Glu84, Tyr135, and Asp244. The glycerol site is built by Arg83, Glu84, Tyr135, Asp244, and Gln245. 2 residues coordinate ADP: Thr266 and Gly309. Residues Thr266, Gly309, Gln313, and Gly410 each contribute to the ATP site. ADP contacts are provided by Gly410 and Asn414.

The protein belongs to the FGGY kinase family. As to quaternary structure, homotetramer and homodimer (in equilibrium).

It carries out the reaction glycerol + ATP = sn-glycerol 3-phosphate + ADP + H(+). It participates in polyol metabolism; glycerol degradation via glycerol kinase pathway; sn-glycerol 3-phosphate from glycerol: step 1/1. Its activity is regulated as follows. Activated by phosphorylation and inhibited by fructose 1,6-bisphosphate (FBP). Functionally, key enzyme in the regulation of glycerol uptake and metabolism. Catalyzes the phosphorylation of glycerol to yield sn-glycerol 3-phosphate. This Symbiobacterium thermophilum (strain DSM 24528 / JCM 14929 / IAM 14863 / T) protein is Glycerol kinase.